Reading from the N-terminus, the 539-residue chain is MKITIKPKLAMAGLALAIGMLNAQAAETRKVDVLLVGGGIMSSTLAVWLNELEPGWSMEMVERLDKVAEESSNGWNNAGTGHSALAELNYTPEKDGKIDISKAVEINESFQVTRQFLAWQVKQGVLKNPHSFINTTPHMSFVWGDDNIRFLKKRYEALQASPLFKPMQYSEDHEQIRKWVPLMMEGRDPNQKLAVTWTPIGTDVNFGEITRQYVGYLQTRPNFDLKLSSEVQDITRNDDGSWHVEYKNLKNGSKAATDARFLFIGAGGAALPLLQKSGIDEAKNYGGFPVGGSFLVTDNPAIAQRHMAKAYGIAATGAPPMSVPHLDTRVLDGKRLILFGPFATFSTKFLKQGSLLDLLASTSVHNAWPMVRVGVREFDLVQYLIGQVLQSDDDRFEALRTYFPEAKKEDWRLWQAGQRVQIIKKDEALGGVLKLGTEVVTSRDGSIAGLLGASPGASTAAPIMLDVLNKVFKNKVASPEWQAKIKQIIPSYGIRLNDHPDQLEKEWAYTNEVLQLEPPVSPQRPESIRPADSQGVASR.

The segment at Leu-516–Arg-539 is disordered.

This sequence belongs to the MQO family. The cofactor is FAD.

It catalyses the reaction (S)-malate + a quinone = a quinol + oxaloacetate. The protein operates within carbohydrate metabolism; tricarboxylic acid cycle; oxaloacetate from (S)-malate (quinone route): step 1/1. This Pseudomonas putida (strain ATCC 47054 / DSM 6125 / CFBP 8728 / NCIMB 11950 / KT2440) protein is Probable malate:quinone oxidoreductase 3.